Reading from the N-terminus, the 232-residue chain is Pseudaminic acid cytidylyltransferase (232 aa).

It belongs to the CMP-NeuNAc synthase family. It depends on Mg(2+) as a cofactor.

The enzyme catalyses pseudaminate + CTP = CMP-pseudaminate + diphosphate. Catalyzes the final step in the biosynthesis of pseudaminic acid, a sialic-acid-like sugar that is used to modify flagellin. Mediates the activation of pseudaminic acid with CMP by forming CMP-pseudaminic acid. This chain is Pseudaminic acid cytidylyltransferase (pseF), found in Campylobacter jejuni subsp. jejuni serotype O:2 (strain ATCC 700819 / NCTC 11168).